A 1541-amino-acid polypeptide reads, in one-letter code: ATP-binding cassette sub-family C member 2 (1541 aa).

At 1-26 (MDKFCNSTFWDLSLLESPEADLPLCF) the chain is on the extracellular side. Asn6 carries an N-linked (GlcNAc...) asparagine glycan. A helical membrane pass occupies residues 27–47 (EQTVLVWIPLGFLWLLAPWQL). The Cytoplasmic segment spans residues 48 to 67 (YSVYRSRTKRSSITKFYLAK). The chain crosses the membrane as a helical span at residues 68–88 (QVFVVFLLILAAIDLSLALTE). Residues 89-92 (DTGQ) lie on the Extracellular side of the membrane. The chain crosses the membrane as a helical span at residues 93 to 113 (ATVPPVRYTNPILYLCTWLLV). At 114-125 (LAVQHSRQWCVR) the chain is on the cytoplasmic side. The helical transmembrane segment at 126 to 146 (KNSWFLSLFWILSVLCGVFQF) threads the bilayer. Residues 147 to 164 (QTLIRALLKDSKSNMAYS) are Extracellular-facing. Residues 165-185 (YLFFVSYGFQIVLLILTAFSG) traverse the membrane as a helical segment. Residues 186–309 (PSDSTQTPSV…DYPKSWLIKS (124 aa)) lie on the Cytoplasmic side of the membrane. A phosphoserine mark is found at Ser279 and Ser281. A helical membrane pass occupies residues 310–330 (LFKTFHVVILKSFILKLIHDL). Positions 318–601 (ILKSFILKLI…LPMVTSSILQ (284 aa)) constitute an ABC transmembrane type-1 1 domain. The Extracellular segment spans residues 331–356 (LVFLNPQLLKLLIGFVKSSNSYVWFG). Residues 357-377 (YICAILMFAVTLIQSFCLQSY) form a helical membrane-spanning segment. The Cytoplasmic portion of the chain corresponds to 378-433 (FQHCFVLGMCVRTTVMSSIYKKALTLSNLARKQYTIGETVNLMSVDSQKLMDATNY). A helical transmembrane segment spans residues 434–454 (MQLVWSSVIQITLSIFFLWRE). Residues 455–457 (LGP) are Extracellular-facing. Residues 458–478 (SILAGVGVMVLLIPVNGVLAT) form a helical membrane-spanning segment. The Cytoplasmic portion of the chain corresponds to 479–540 (KIRNIQVQNM…NLLRFGQLQS (62 aa)). A helical transmembrane segment spans residues 541 to 561 (LLIFILQITPILVSVVTFSVY). Residues 562-583 (VLVDSANVLNAEKAFTSITLFN) are Extracellular-facing. The chain crosses the membrane as a helical span at residues 584 to 604 (ILRFPLSMLPMVTSSILQASV). Residues 605 to 967 (SVDRLERYLG…VKFSIYLKYL (363 aa)) lie on the Cytoplasmic side of the membrane. One can recognise an ABC transporter 1 domain in the interval 633-857 (VKFSEASFTW…KGVFARNWKT (225 aa)). ATP is bound at residue 667–674 (GTVGSGKS). 2 disordered regions span residues 862-881 (SGPE…DDDD) and 901-923 (RENS…GKSL). Ser874 carries the phosphoserine modification. The segment covering 906 to 915 (RRTLSRSSRS) has biased composition (low complexity). 2 positions are modified to phosphoserine: Ser922 and Ser926. The helical transmembrane segment at 968 to 988 (QAVGWWSILFIILFYGLNNVA) threads the bilayer. Positions 975 to 1260 (ILFIILFYGL…LVRMTSEAET (286 aa)) constitute an ABC transmembrane type-1 2 domain. Topologically, residues 989-1029 (FIGSNLWLSAWTSDSDNLNGTNNSSSHRDMRIGVFGALGLA) are extracellular. N-linked (GlcNAc...) asparagine glycans are attached at residues Asn1007, Asn1010, and Asn1011. A helical membrane pass occupies residues 1030–1050 (QGICLLISTLWSIYACRNASK). Topologically, residues 1051–1093 (ALHGQLLTNILRAPMRFFDTTPTGRIVNRFSGDISTVDDLLPQ) are cytoplasmic. Residues 1094 to 1114 (TLRSWMMCFFGIAGTLVMICM) traverse the membrane as a helical segment. Residue Ala1115 is a topological domain, extracellular. The helical transmembrane segment at 1116–1136 (TPVFAIIIIPLSILYISVQVF) threads the bilayer. The Cytoplasmic portion of the chain corresponds to 1137–1207 (YVATSRQLRR…TSNRWLAIRL (71 aa)). The helical transmembrane segment at 1208-1228 (ELVGNLVVFCSALLLVIYRKT) threads the bilayer. Over 1229–1230 (LT) the chain is Extracellular. A helical transmembrane segment spans residues 1231–1251 (GDVVGFVLSNALNITQTLNWL). Over 1252-1541 (VRMTSEAETN…GIENVNHTEL (290 aa)) the chain is Cytoplasmic. The region spanning 1296–1530 (IQFNNYQVRY…RGSFYLMAKE (235 aa)) is the ABC transporter 2 domain. 1330-1337 (GRTGAGKS) contacts ATP. Ser1434 is modified (phosphoserine).

It belongs to the ABC transporter superfamily. ABCC family. Conjugate transporter (TC 3.A.1.208) subfamily. Mainly expressed in the liver.

The protein resides in the apical cell membrane. It carries out the reaction an S-substituted glutathione(in) + ATP + H2O = an S-substituted glutathione(out) + ADP + phosphate + H(+). The catalysed reaction is taurolithocholate 3-sulfate(in) + ATP + H2O = taurolithocholate 3-sulfate(out) + ADP + phosphate + H(+). The enzyme catalyses ATP + H2O + xenobioticSide 1 = ADP + phosphate + xenobioticSide 2.. It catalyses the reaction 17beta-estradiol 17-O-(beta-D-glucuronate)(in) + ATP + H2O = 17beta-estradiol 17-O-(beta-D-glucuronate)(out) + ADP + phosphate + H(+). It carries out the reaction leukotriene C4(in) + ATP + H2O = leukotriene C4(out) + ADP + phosphate + H(+). The catalysed reaction is (4Z,15Z)-bilirubin IXalpha C8-beta-D-glucuronoside(in) + ATP + H2O = (4Z,15Z)-bilirubin IXalpha C8-beta-D-glucuronoside(out) + ADP + phosphate + H(+). The enzyme catalyses (4Z,15Z)-bilirubin IXalpha C8,C12-beta-D-bisglucuronoside(in) + ATP + H2O = (4Z,15Z)-bilirubin IXalpha C8,C12-beta-D-bisglucuronoside(out) + ADP + phosphate + H(+). In terms of biological role, ATP-dependent transporter of the ATP-binding cassette (ABC) family that binds and hydrolyzes ATP to enable active transport of various substrates including many drugs, toxicants and endogenous compound across cell membranes. Transports a wide variety of conjugated organic anions such as sulfate-, glucuronide- and glutathione (GSH)-conjugates of endo- and xenobiotics substrates. Mediates hepatobiliary excretion of mono- and bis-glucuronidated bilirubin molecules and therefore play an important role in bilirubin detoxification. Also mediates hepatobiliary excretion of others glucuronide conjugates such as 17beta-estradiol 17-glucosiduronic acid and leukotriene C4. Transports sulfated bile salt such as taurolithocholate sulfate. Transports various anticancer drugs, such as anthracycline, vinca alkaloid and methotrexate and HIV-drugs such as protease inhibitors. In Rattus norvegicus (Rat), this protein is ATP-binding cassette sub-family C member 2.